The following is a 329-amino-acid chain: Bile salt hydrolase/transferase (329 aa).

The active-site Nucleophile; acyl-thioester intermediate is the C2. Deoxycholate-binding residues include C2 and R18. N82 is a taurine binding site.

It belongs to the peptidase C59 family. Homotetramer. The tetramer consists of a dimer of dimers.

The enzyme catalyses glycocholate + H2O = cholate + glycine. It carries out the reaction cholate + taurine = taurocholate + H2O. The catalysed reaction is taurodeoxycholate + H2O = deoxycholate + taurine. It catalyses the reaction glycodeoxycholate + H2O = deoxycholate + glycine. The enzyme catalyses chenodeoxycholate + glycine = glycochenodeoxycholate + H2O. It carries out the reaction taurochenodeoxycholate + H2O = chenodeoxycholate + taurine. The catalysed reaction is an L-alpha-amino acid + cholate = an N-choloyl-L-alpha-amino acid + H2O. It catalyses the reaction an L-alpha-amino acid + taurocholate = an N-choloyl-L-alpha-amino acid + taurine. The enzyme catalyses glycocholate + an L-alpha-amino acid = an N-choloyl-L-alpha-amino acid + glycine. It carries out the reaction cholate + L-histidine = L-histidocholate + H2O. The catalysed reaction is taurocholate + L-histidine = L-histidocholate + taurine. It catalyses the reaction glycocholate + L-histidine = L-histidocholate + glycine. The enzyme catalyses cholate + L-arginine = L-arginocholate + H2O. It carries out the reaction taurocholate + L-arginine = L-arginocholate + taurine. The catalysed reaction is glycocholate + L-arginine = L-arginocholate + glycine. It catalyses the reaction cholate + L-phenylalanine = L-phenylalanocholate + H2O. The enzyme catalyses taurocholate + L-phenylalanine = L-phenylalanocholate + taurine. It functions in the pathway lipid metabolism; bile acid biosynthesis. In terms of biological role, possesses dual functions in bile acid metabolism. Acts as a bile salt hydrolase that catalyzes the deconjugation of glycine- and taurine-linked bile salts, which occurs naturally in the intestines of humans, releasing amino acid residues and deconjugated bile salts (bile acids). Can hydrolyze the amide bond in major human conjugated bile salts, such as glycocholate (GCA), taurocholate (TCA) and taurodeoxycholate (TDCA). Shows a slight preference for taurine-conjugated bile acids as substrates. Also acts as an amine N-acyltransferase that conjugates a wide variety of amino acids to conjugated and non-conjugated bile acids, thus producing bacterial bile acid amidates (BBAAs) - also named microbially conjugated bile acids (MCBAs) - in the gastrointestinal tract. These BBAAs may facilitate communication between the microbiota and host through the activation of human ligand-activated transcription factors. The sequence is that of Bile salt hydrolase/transferase (cbh) from Clostridium perfringens (strain 13 / Type A).